Reading from the N-terminus, the 353-residue chain is UDP-N-acetylglucosamine--N-acetylmuramyl-(pentapeptide) pyrophosphoryl-undecaprenol N-acetylglucosamine transferase (353 aa).

UDP-N-acetyl-alpha-D-glucosamine contacts are provided by residues 11–13, arginine 164, serine 194, and glutamine 289; that span reads SAG.

The protein belongs to the glycosyltransferase 28 family. MurG subfamily.

Its subcellular location is the cell membrane. It catalyses the reaction di-trans,octa-cis-undecaprenyl diphospho-N-acetyl-alpha-D-muramoyl-L-alanyl-D-glutamyl-meso-2,6-diaminopimeloyl-D-alanyl-D-alanine + UDP-N-acetyl-alpha-D-glucosamine = di-trans,octa-cis-undecaprenyl diphospho-[N-acetyl-alpha-D-glucosaminyl-(1-&gt;4)]-N-acetyl-alpha-D-muramoyl-L-alanyl-D-glutamyl-meso-2,6-diaminopimeloyl-D-alanyl-D-alanine + UDP + H(+). The protein operates within cell wall biogenesis; peptidoglycan biosynthesis. Functionally, cell wall formation. Catalyzes the transfer of a GlcNAc subunit on undecaprenyl-pyrophosphoryl-MurNAc-pentapeptide (lipid intermediate I) to form undecaprenyl-pyrophosphoryl-MurNAc-(pentapeptide)GlcNAc (lipid intermediate II). This Clostridium kluyveri (strain ATCC 8527 / DSM 555 / NBRC 12016 / NCIMB 10680 / K1) protein is UDP-N-acetylglucosamine--N-acetylmuramyl-(pentapeptide) pyrophosphoryl-undecaprenol N-acetylglucosamine transferase.